A 309-amino-acid chain; its full sequence is Glutaminase (309 aa).

Substrate is bound by residues serine 64, asparagine 114, glutamate 160, asparagine 167, tyrosine 191, tyrosine 243, and valine 261.

This sequence belongs to the glutaminase family. Homotetramer.

It carries out the reaction L-glutamine + H2O = L-glutamate + NH4(+). The polypeptide is Glutaminase (Azorhizobium caulinodans (strain ATCC 43989 / DSM 5975 / JCM 20966 / LMG 6465 / NBRC 14845 / NCIMB 13405 / ORS 571)).